Here is an 866-residue protein sequence, read N- to C-terminus: DNA replication licensing factor MCM4 (866 aa).

Disordered stretches follow at residues 1 to 67 (MSSP…TSPA), 81 to 107 (SPLNYGTPSSMGSIRTPRSGIRGTPLR), and 124 to 145 (GGGSGLEPIPEKGSETTDPVSE). Polar residues-rich tracts occupy residues 47–63 (DNISLPPTSPGNISLPA) and 81–93 (SPLNYGTPSSMGS). Residues Ser55 and Ser81 each carry the phosphoserine modification. Thr87 carries the phosphothreonine modification. The MCM domain maps to 460-669 (IYDRLARAIA…FDKRLASHLV (210 aa)). Residue 512 to 519 (GDPGTSKS) coordinates ATP. The Arginine finger motif lies at 644–647 (SRFD).

It belongs to the MCM family. In terms of assembly, component of the Mcm2-7 complex. The complex forms a toroidal hexameric ring with the proposed subunit order Mcm2-Mcm6-Mcm4-Mcm7-Mcm3-Mcm5. In terms of processing, phosphorylated by the catalytic component of the Dbf4-dependent kinase (DDK) complex Cdc7.

Its subcellular location is the nucleus. It catalyses the reaction ATP + H2O = ADP + phosphate + H(+). Its function is as follows. Acts as a component of the Mcm2-7 complex (Mcm complex) which is the putative replicative helicase essential for 'once per cell cycle' DNA replication initiation and elongation in eukaryotic cells. The active ATPase sites in the Mcm2-7 ring are formed through the interaction surfaces of two neighboring subunits such that a critical structure of a conserved arginine finger motif is provided in trans relative to the ATP-binding site of the Walker A box of the adjacent subunit. The six ATPase active sites, however, are likely to contribute differentially to the complex helicase activity. Required for DNA replication and cell proliferation. Essential role in mitotic DNA replication but not in endoreplication. The sequence is that of DNA replication licensing factor MCM4 (dpa) from Drosophila melanogaster (Fruit fly).